We begin with the raw amino-acid sequence, 741 residues long: Zinc metalloproteinase nas-30 (741 aa).

Composition is skewed to low complexity over residues 71-85 (KPAP…APAP) and 97-118 (PAPK…DAPP). Residues 71–122 (KPAPAAAGPRSAPAPTNEDYNTDIDVPAPKAKARAAPTPRRAQADAPPVYRQ) form a disordered region. In terms of domain architecture, Peptidase M12A spans 324-516 (KVITGSVYRW…VKQVNRLYCN (193 aa)). Intrachain disulfides connect cysteine 364–cysteine 515, cysteine 385–cysteine 404, cysteine 519–cysteine 539, cysteine 541–cysteine 550, cysteine 562–cysteine 583, and cysteine 610–cysteine 630. Histidine 412 is a Zn(2+) binding site. The active site involves glutamate 413. Zn(2+)-binding residues include histidine 416 and histidine 422. The 12-residue stretch at 539–550 (CKCPDGLGGKLC) folds into the EGF-like domain. Positions 550-648 (CGRAAKGTDH…ISDQSEALIL (99 aa)) constitute a CUB domain. Asparagine 633 carries an N-linked (GlcNAc...) asparagine glycan.

Requires Zn(2+) as cofactor.

Metalloprotease. The protein is Zinc metalloproteinase nas-30 of Caenorhabditis elegans.